A 188-amino-acid chain; its full sequence is Large ribosomal subunit protein uL6 (188 aa).

It belongs to the universal ribosomal protein uL6 family. As to quaternary structure, part of the 50S ribosomal subunit.

Functionally, this protein binds to the 23S rRNA, and is important in its secondary structure. It is located near the subunit interface in the base of the L7/L12 stalk, and near the tRNA binding site of the peptidyltransferase center. The chain is Large ribosomal subunit protein uL6 from Myxococcus xanthus (strain DK1622).